The following is a 622-amino-acid chain: Dynein axonemal assembly factor 1 (622 aa).

The segment covering 1–11 (MHPEVSEQQAD) has biased composition (polar residues). The segment at 1–80 (MHPEVSEQQA…ARNDRDDRGP (80 aa)) is disordered. Basic and acidic residues predominate over residues 32-42 (VRKEEINETKE). The segment covering 48–59 (STTSCQSQKQQS) has biased composition (low complexity). Over residues 62-80 (SRLECRSGYARNDRDDRGP) the composition is skewed to basic and acidic residues. LRR repeat units lie at residues 101–123 (ALND…EEYT), 124–145 (GLRC…QAQS), 146–167 (ELRC…EPLQ), 168–189 (KLDA…SCLP), 190–211 (VLNT…QHLG), and 215–236 (RLCV…SVLE). One can recognise an LRRCT domain in the interval 249-288 (NPVTKHIPNYRRTVTVRLKQLTYLDDRPVFPKDRACAEAW). Basic and acidic residues predominate over residues 326–336 (EERKKARDKGE). The interval 326–363 (EERKKARDKGETPLPDSEESSSTSPEAQEKPPLGETQE) is disordered. Over residues 337 to 351 (TPLPDSEESSSTSPE) the composition is skewed to low complexity. Residues Ser349, Ser464, and Ser487 each carry the phosphoserine modification. 2 disordered regions span residues 481–505 (SSLS…TPTG) and 535–622 (TATT…FGLD). Polar residues-rich tracts occupy residues 535 to 552 (TATT…TTRP) and 568 to 578 (EPNQSLPAQSS).

This sequence belongs to the DNAAF1 family.

The protein localises to the cell projection. Its subcellular location is the cilium. Functionally, cilium-specific protein required for the stability of the ciliary architecture. Plays a role in cytoplasmic preassembly of dynein arms. Involved in regulation of microtubule-based cilia and actin-based brush border microvilli. The sequence is that of Dynein axonemal assembly factor 1 (Dnaaf1) from Peromyscus californicus (California mouse).